We begin with the raw amino-acid sequence, 579 residues long: Transcription factor MTB2 (579 aa).

The interval 373-439 (GGMQIDFTNS…PLNHVEAERQ (67 aa)) is disordered. Over residues 382–392 (SRPVVSPVPTV) the composition is skewed to low complexity. 2 stretches are compositionally biased toward basic and acidic residues: residues 393–415 (ESEHSDVEVSCKEKHAGPADERR) and 425–439 (NGREEPLNHVEAERQ). Positions 428–441 (EEPLNHVEAERQRR) are basic motif; degenerate. A bHLH domain is found at 428-477 (EEPLNHVEAERQRREKLNQRFYALRAVVPNISKMDKASLLGDAIAHITDM). Residues 442 to 477 (EKLNQRFYALRAVVPNISKMDKASLLGDAIAHITDM) are helix-loop-helix motif.

The protein localises to the nucleus. Its function is as follows. Transcription factor that negatively regulates jasmonate (JA) signaling. Negatively regulates JA-dependent response to wounding, JA-induced expression of defense genes, JA-dependent responses against herbivorous insects, and JA-dependent resistance against Botrytis cinerea infection. Plays a positive role in resistance against the bacterial pathogen Pseudomonas syringae pv tomato DC3000. The sequence is that of Transcription factor MTB2 from Solanum lycopersicum (Tomato).